Here is a 223-residue protein sequence, read N- to C-terminus: Neurotrophic factor BDNF precursor form (223 aa).

The N-terminal stretch at 1-5 (SCMKA) is a signal peptide. The propeptide occupies 6 to 114 (APMKEVSIRG…AANMSMRVRR (109 aa)). N-linked (GlcNAc...) asparagine glycosylation is present at asparagine 107. Disulfide bonds link cysteine 127-cysteine 194 and cysteine 172-cysteine 223.

It belongs to the NGF-beta family.

The protein resides in the secreted. Promotes the survival of neuronal populations that are all located either in the central nervous system or directly connected to it. The polypeptide is Neurotrophic factor BDNF precursor form (BDNF) (Exiliboa placata (Oaxacan dwarf boa)).